The chain runs to 122 residues: Sterile alpha motif domain-containing protein 13 (122 aa).

An SAM domain is found at 51–119 (WAVMDVVNYF…KPLQTKHLKN (69 aa)).

This is Sterile alpha motif domain-containing protein 13 (SAMD13) from Homo sapiens (Human).